Consider the following 351-residue polypeptide: Nicotinate-nucleotide--dimethylbenzimidazole phosphoribosyltransferase (351 aa).

E317 functions as the Proton acceptor in the catalytic mechanism.

Belongs to the CobT family.

The enzyme catalyses 5,6-dimethylbenzimidazole + nicotinate beta-D-ribonucleotide = alpha-ribazole 5'-phosphate + nicotinate + H(+). Its pathway is nucleoside biosynthesis; alpha-ribazole biosynthesis; alpha-ribazole from 5,6-dimethylbenzimidazole: step 1/2. In terms of biological role, catalyzes the synthesis of alpha-ribazole-5'-phosphate from nicotinate mononucleotide (NAMN) and 5,6-dimethylbenzimidazole (DMB). This is Nicotinate-nucleotide--dimethylbenzimidazole phosphoribosyltransferase from Bradyrhizobium sp. (strain ORS 278).